The primary structure comprises 301 residues: Probable alpha-L-glutamate ligase (301 aa).

In terms of domain architecture, ATP-grasp spans L104–E287. ATP-binding positions include K141, E178–F179, D187, and R211–N213. The Mg(2+) site is built by D248, E260, and N262. The Mn(2+) site is built by D248, E260, and N262.

The protein belongs to the RimK family. It depends on Mg(2+) as a cofactor. Requires Mn(2+) as cofactor.

This Hydrogenovibrio crunogenus (strain DSM 25203 / XCL-2) (Thiomicrospira crunogena) protein is Probable alpha-L-glutamate ligase.